Consider the following 419-residue polypeptide: Ubiquitin receptor RAD23c (419 aa).

Residues 1–79 (MKIFVKTLKG…IVIMMNKSKP (79 aa)) enclose the Ubiquitin-like domain. The segment covering 83–118 (AASSASAGTSQAKSIPPSTSQPSISPQTPASVSAPV) has biased composition (low complexity). Positions 83–172 (AASSASAGTS…DSAPVGSQGD (90 aa)) are disordered. Residues 119-135 (APAPTRPPPPAPTPTPA) show a composition bias toward pro residues. Positions 136-146 (PVAATETVTTP) are enriched in low complexity. Positions 185–228 (SNLESTIQQILDMGGGTWDRETVVLALRAAFNNPERAVEYLYTG) constitute a UBA 1 domain. The disordered stretch occupies residues 235 to 282 (VPPVARPPASAGQPANPPAQTQQPAAAPASGPNANPLDLFPQGLPNVG). The segment covering 245 to 270 (AGQPANPPAQTQQPAAAPASGPNANP) has biased composition (low complexity). Residues 288–331 (GTLDFLRNSQQFQALRAMVQANPQVLQPMLQELGKQNPNLMRLI) form the STI1 domain. Residues 372–413 (THEEREAIERLEAMGFERALVLEVFFACNKNEELAANYLLDH) enclose the UBA 2 domain.

Belongs to the RAD23 family. As to quaternary structure, interacts with 'Lys-48'-linked polyubiquitin chains via its both UBA domains. Interacts with RPN10 via its ubiquitin-like domain. As to expression, widely expressed in the whole plant.

The protein resides in the nucleus. It localises to the cytoplasm. May be involved in nucleotide excision repair. Binds and presumably selects ubiquitin-conjugates for destruction. Prefers multiubiquitin chains rather than single ubiquitins, with a binding affinity for 'Lys-48'-linked ubiquitin chains. Acts as a ubiquitin receptor that associates with the 26S proteasomal docking subunit RPN10 for the indirect recognition of ubiquitinated substrates of ubiquitin/26S proteasome-mediated proteolysis (UPP). Involved in UV tolerance in hypocotyls, specifically in dark conditions. The protein is Ubiquitin receptor RAD23c of Arabidopsis thaliana (Mouse-ear cress).